The primary structure comprises 726 residues: Dipeptidyl-peptidase 5 (726 aa).

The N-terminal stretch at 1–19 is a signal peptide; sequence MAAAKWLIASLAFASSGLA. 2 N-linked (GlcNAc...) asparagine glycosylation sites follow: N96 and N252. The interval 269–291 is disordered; that stretch reads AEPINKRNGPRTPQGIEGASSSP. The active-site Charge relay system is S558. N-linked (GlcNAc...) asparagine glycans are attached at residues N605 and N638. Active-site charge relay system residues include D641 and H673. N-linked (GlcNAc...) asparagine glycosylation is present at N699.

It belongs to the peptidase S9C family.

It is found in the secreted. This is Dipeptidyl-peptidase 5 (DPPV) from Trichophyton schoenleinii.